The sequence spans 258 residues: uncharacterized protein (258 aa).

Residues 16–148 enclose the Cyclin N-terminal domain; that stretch reads EAFDSFEYAE…VLRALNFDTH (133 aa).

The protein belongs to the cyclin family. Cyclin L subfamily.

It is found in the cytoplasm. It localises to the nucleus. This is an uncharacterized protein from Schizosaccharomyces pombe (strain 972 / ATCC 24843) (Fission yeast).